The chain runs to 931 residues: Isoleucine--tRNA ligase (931 aa).

Residues P57–H67 carry the 'HIGH' region motif. Position 555 (E555) interacts with L-isoleucyl-5'-AMP. The 'KMSKS' region signature appears at K596–S600. Residue K599 coordinates ATP. Zn(2+) contacts are provided by C890, C893, C910, and C913.

Belongs to the class-I aminoacyl-tRNA synthetase family. IleS type 1 subfamily. Monomer. It depends on Zn(2+) as a cofactor.

It is found in the cytoplasm. The catalysed reaction is tRNA(Ile) + L-isoleucine + ATP = L-isoleucyl-tRNA(Ile) + AMP + diphosphate. In terms of biological role, catalyzes the attachment of isoleucine to tRNA(Ile). As IleRS can inadvertently accommodate and process structurally similar amino acids such as valine, to avoid such errors it has two additional distinct tRNA(Ile)-dependent editing activities. One activity is designated as 'pretransfer' editing and involves the hydrolysis of activated Val-AMP. The other activity is designated 'posttransfer' editing and involves deacylation of mischarged Val-tRNA(Ile). The protein is Isoleucine--tRNA ligase of Limosilactobacillus reuteri subsp. reuteri (strain JCM 1112) (Lactobacillus reuteri).